Here is a 616-residue protein sequence, read N- to C-terminus: Dihydroxy-acid dehydratase (616 aa).

Residue Asp-81 participates in Mg(2+) binding. A [2Fe-2S] cluster-binding site is contributed by Cys-122. The Mg(2+) site is built by Asp-123 and Lys-124. N6-carboxylysine is present on Lys-124. Cys-195 lines the [2Fe-2S] cluster pocket. Residue Glu-491 coordinates Mg(2+). The active-site Proton acceptor is the Ser-517.

Belongs to the IlvD/Edd family. As to quaternary structure, homodimer. The cofactor is [2Fe-2S] cluster. It depends on Mg(2+) as a cofactor.

It carries out the reaction (2R)-2,3-dihydroxy-3-methylbutanoate = 3-methyl-2-oxobutanoate + H2O. The catalysed reaction is (2R,3R)-2,3-dihydroxy-3-methylpentanoate = (S)-3-methyl-2-oxopentanoate + H2O. It functions in the pathway amino-acid biosynthesis; L-isoleucine biosynthesis; L-isoleucine from 2-oxobutanoate: step 3/4. Its pathway is amino-acid biosynthesis; L-valine biosynthesis; L-valine from pyruvate: step 3/4. Its function is as follows. Functions in the biosynthesis of branched-chain amino acids. Catalyzes the dehydration of (2R,3R)-2,3-dihydroxy-3-methylpentanoate (2,3-dihydroxy-3-methylvalerate) into 2-oxo-3-methylpentanoate (2-oxo-3-methylvalerate) and of (2R)-2,3-dihydroxy-3-methylbutanoate (2,3-dihydroxyisovalerate) into 2-oxo-3-methylbutanoate (2-oxoisovalerate), the penultimate precursor to L-isoleucine and L-valine, respectively. In Escherichia coli O17:K52:H18 (strain UMN026 / ExPEC), this protein is Dihydroxy-acid dehydratase.